Here is a 109-residue protein sequence, read N- to C-terminus: Spermidine export protein MdtI (109 aa).

The next 4 helical transmembrane spans lie at 6-26 (WIHA…NVFL), 36-56 (IYGI…SQAV), 64-84 (AYAL…WVLF), and 88-108 (LNNK…LIKL).

This sequence belongs to the drug/metabolite transporter (DMT) superfamily. Small multidrug resistance (SMR) (TC 2.A.7.1) family. MdtI subfamily. Forms a complex with MdtJ.

It is found in the cell inner membrane. Functionally, catalyzes the excretion of spermidine. The polypeptide is Spermidine export protein MdtI (Klebsiella pneumoniae subsp. pneumoniae (strain ATCC 700721 / MGH 78578)).